The chain runs to 228 residues: Demethylmenaquinone methyltransferase (228 aa).

S-adenosyl-L-methionine contacts are provided by residues threonine 62, aspartate 80, 100-101 (DA), and serine 117.

The protein belongs to the class I-like SAM-binding methyltransferase superfamily. MenG/UbiE family.

It carries out the reaction a 2-demethylmenaquinol + S-adenosyl-L-methionine = a menaquinol + S-adenosyl-L-homocysteine + H(+). Its pathway is quinol/quinone metabolism; menaquinone biosynthesis; menaquinol from 1,4-dihydroxy-2-naphthoate: step 2/2. In terms of biological role, methyltransferase required for the conversion of demethylmenaquinol (DMKH2) to menaquinol (MKH2). The polypeptide is Demethylmenaquinone methyltransferase (Mycolicibacterium gilvum (strain PYR-GCK) (Mycobacterium gilvum (strain PYR-GCK))).